We begin with the raw amino-acid sequence, 101 residues long: NADH-quinone oxidoreductase subunit K (101 aa).

The next 3 helical transmembrane spans lie at 4 to 24 (LSHF…GIFL), 30 to 50 (IVLL…FIAF), and 61 to 81 (VFVF…LAIL).

The protein belongs to the complex I subunit 4L family. In terms of assembly, NDH-1 is composed of 14 different subunits. Subunits NuoA, H, J, K, L, M, N constitute the membrane sector of the complex.

The protein resides in the cell inner membrane. The catalysed reaction is a quinone + NADH + 5 H(+)(in) = a quinol + NAD(+) + 4 H(+)(out). Functionally, NDH-1 shuttles electrons from NADH, via FMN and iron-sulfur (Fe-S) centers, to quinones in the respiratory chain. The immediate electron acceptor for the enzyme in this species is believed to be ubiquinone. Couples the redox reaction to proton translocation (for every two electrons transferred, four hydrogen ions are translocated across the cytoplasmic membrane), and thus conserves the redox energy in a proton gradient. This Thiobacillus denitrificans (strain ATCC 25259 / T1) protein is NADH-quinone oxidoreductase subunit K.